The chain runs to 224 residues: Ribulose-phosphate 3-epimerase (224 aa).

A substrate-binding site is contributed by S8. Residues H31, D33, and H64 each contribute to the a divalent metal cation site. D33 serves as the catalytic Proton acceptor. Substrate contacts are provided by residues H64, 140–143, 173–175, and 195–196; these read GFGG, DGG, and GS. D173 contributes to the a divalent metal cation binding site. The active-site Proton donor is the D173.

It belongs to the ribulose-phosphate 3-epimerase family. It depends on a divalent metal cation as a cofactor.

It carries out the reaction D-ribulose 5-phosphate = D-xylulose 5-phosphate. The protein operates within carbohydrate degradation. In terms of biological role, catalyzes the reversible epimerization of D-ribulose 5-phosphate to D-xylulose 5-phosphate. The protein is Ribulose-phosphate 3-epimerase of Mycobacterium leprae (strain TN).